Consider the following 184-residue polypeptide: UPF0398 protein BCB4264_A1614 (184 aa).

It belongs to the UPF0398 family.

The protein is UPF0398 protein BCB4264_A1614 of Bacillus cereus (strain B4264).